Here is a 90-residue protein sequence, read N- to C-terminus: MSAKNDNLFEKKLARLQEIVGALESGDLPLEKGMALYKEGATCARYCRQQLDKARHELEIWQDGQANPMSSQGHTAGEYPDDEAEEAEEA.

The tract at residues 62–90 (QDGQANPMSSQGHTAGEYPDDEAEEAEEA) is disordered. A compositionally biased stretch (polar residues) spans 64–74 (GQANPMSSQGH). Residues 79 to 90 (YPDDEAEEAEEA) are compositionally biased toward acidic residues.

The protein belongs to the XseB family. In terms of assembly, heterooligomer composed of large and small subunits.

Its subcellular location is the cytoplasm. The enzyme catalyses Exonucleolytic cleavage in either 5'- to 3'- or 3'- to 5'-direction to yield nucleoside 5'-phosphates.. Its function is as follows. Bidirectionally degrades single-stranded DNA into large acid-insoluble oligonucleotides, which are then degraded further into small acid-soluble oligonucleotides. This Desulfovibrio desulfuricans (strain ATCC 27774 / DSM 6949 / MB) protein is Exodeoxyribonuclease 7 small subunit.